Consider the following 707-residue polypeptide: Elongation factor G (707 aa).

Positions E8–T296 constitute a tr-type G domain. GTP contacts are provided by residues A17–T24, D94–H98, and N148–D151.

The protein belongs to the TRAFAC class translation factor GTPase superfamily. Classic translation factor GTPase family. EF-G/EF-2 subfamily.

Its subcellular location is the cytoplasm. Functionally, catalyzes the GTP-dependent ribosomal translocation step during translation elongation. During this step, the ribosome changes from the pre-translocational (PRE) to the post-translocational (POST) state as the newly formed A-site-bound peptidyl-tRNA and P-site-bound deacylated tRNA move to the P and E sites, respectively. Catalyzes the coordinated movement of the two tRNA molecules, the mRNA and conformational changes in the ribosome. This chain is Elongation factor G, found in Paracoccus denitrificans (strain Pd 1222).